Reading from the N-terminus, the 84-residue chain is Putative ribosomal RNA large subunit methyltransferase H 2 (84 aa).

S-adenosyl-L-methionine-binding positions include Gly33 and 52-57 (FSKMTF).

It belongs to the RNA methyltransferase RlmH family. In terms of assembly, homodimer.

It localises to the cytoplasm. The catalysed reaction is pseudouridine(1915) in 23S rRNA + S-adenosyl-L-methionine = N(3)-methylpseudouridine(1915) in 23S rRNA + S-adenosyl-L-homocysteine + H(+). Its function is as follows. Specifically methylates the pseudouridine at position 1915 (m3Psi1915) in 23S rRNA. This Clostridium perfringens (strain SM101 / Type A) protein is Putative ribosomal RNA large subunit methyltransferase H 2 (rlmH2).